The chain runs to 467 residues: Fumarate hydratase class II (467 aa).

Residues 98 to 100 (SGT), Arg126, 129 to 132 (HPND), 139 to 141 (SSN), and Thr187 contribute to the substrate site. His188 functions as the Proton donor/acceptor in the catalytic mechanism. Ser318 is an active-site residue. Substrate contacts are provided by residues Ser319 and 324-326 (KVN).

It belongs to the class-II fumarase/aspartase family. Fumarase subfamily. In terms of assembly, homotetramer.

The protein localises to the cytoplasm. The enzyme catalyses (S)-malate = fumarate + H2O. It functions in the pathway carbohydrate metabolism; tricarboxylic acid cycle; (S)-malate from fumarate: step 1/1. In terms of biological role, involved in the TCA cycle. Catalyzes the stereospecific interconversion of fumarate to L-malate. The chain is Fumarate hydratase class II from Escherichia coli O157:H7.